The primary structure comprises 140 residues: Ribosomal RNA large subunit methyltransferase H (140 aa).

S-adenosyl-L-methionine contacts are provided by residues Leu58, Gly90, and 108–113 (LSLLTF).

The protein belongs to the RNA methyltransferase RlmH family. Homodimer.

The protein localises to the cytoplasm. It carries out the reaction pseudouridine(1915) in 23S rRNA + S-adenosyl-L-methionine = N(3)-methylpseudouridine(1915) in 23S rRNA + S-adenosyl-L-homocysteine + H(+). Its function is as follows. Specifically methylates the pseudouridine at position 1915 (m3Psi1915) in 23S rRNA. In Protochlamydia amoebophila (strain UWE25), this protein is Ribosomal RNA large subunit methyltransferase H.